Reading from the N-terminus, the 1285-residue chain is Peroxidasin homolog pxn-1 (1285 aa).

Positions M1 to G20 are cleaved as a signal peptide. Residues L21 to N53 form the LRRNT domain. LRR repeat units lie at residues C27–N49, I50–L72, E73–L96, D97–S120, S122–L143, Y145–D168, and K204–T227. N49 is a glycosylation site (N-linked (GlcNAc...) asparagine). In terms of domain architecture, LRRCT spans S180–C228. Residue N248 is glycosylated (N-linked (GlcNAc...) asparagine). The segment at R305–N324 is disordered. Over residues S307 to F317 the composition is skewed to polar residues. 2 Ig-like C2-type domains span residues P315 to D401 and P408 to T495. Cystine bridges form between C336–C385 and C429–C479. Residues Q508–L550 adopt a coiled-coil conformation. N-linked (GlcNAc...) asparagine glycosylation is present at N595. Cysteines 625 and 641 form a disulfide. D719 provides a ligand contact to heme b. The Proton acceptor role is filled by H720. Residue D721 participates in Ca(2+) binding. Cystine bridges form between C740–C750 and C744–C771. N741 carries N-linked (GlcNAc...) asparagine glycosylation. Ca(2+) contacts are provided by T803, F805, D807, and S809. N858 is a glycosylation site (N-linked (GlcNAc...) asparagine). Residues E877 and H973 each coordinate heme b. LRR repeat units follow at residues H998–A1022 and V1049–R1073. Intrachain disulfides connect C1076–C1133 and C1174–C1201. An LRR 12 repeat occupies T1168–M1189.

The protein belongs to the peroxidase family. XPO subfamily. Requires Ca(2+) as cofactor. Heme b is required as a cofactor. As to expression, expressed in the ventral nerve cord, the dorsal nerve cord, head neurons, GABAergic and cholinergic neurons, body wall muscles, vulval muscles, uterine muscles, intestine, the hypodermis and in coelomocytes.

The protein resides in the secreted. Its subcellular location is the extracellular space. It localises to the extracellular matrix. It carries out the reaction L-lysyl-[collagen] + L-methionyl-[collagen] + H2O2 = [collagen]-L-lysyl-N-S-L-methionyl-[collagen] + 2 H2O + H(+). The catalysed reaction is bromide + H2O2 = hypobromite + H2O. It catalyses the reaction L-lysyl-[collagen] + L-methionyl-[collagen] + hypobromite = [collagen]-L-lysyl-N-S-L-methionyl-[collagen] + bromide + H2O + H(+). The enzyme catalyses L-tyrosyl-[protein] + bromide + H2O2 + H(+) = 3-bromo-L-tyrosyl-[protein] + 2 H2O. It carries out the reaction hypobromite + L-tyrosyl-[protein] + H(+) = 3-bromo-L-tyrosyl-[protein] + H2O. Its function is as follows. Catalyzes the two-electron oxidation of bromide by hydrogen peroxide and generates hypobromite as a reactive intermediate which mediates the formation of sulfilimine cross-links between methionine and hydroxylysine residues within an uncross-linked collagen IV NC1 hexamer. Plays a role in the attachment of tissues and in axonal guidance during early developmental stages. May functionally antagonize the peroxidasin pxn-2 to maintain neuronal development. This is Peroxidasin homolog pxn-1 from Caenorhabditis elegans.